The chain runs to 186 residues: Probable chorismate pyruvate-lyase (186 aa).

The substrate site is built by R80, L118, and E170.

Belongs to the UbiC family.

Its subcellular location is the cytoplasm. The enzyme catalyses chorismate = 4-hydroxybenzoate + pyruvate. It participates in cofactor biosynthesis; ubiquinone biosynthesis. In terms of biological role, removes the pyruvyl group from chorismate, with concomitant aromatization of the ring, to provide 4-hydroxybenzoate (4HB) for the ubiquinone pathway. In Pseudomonas syringae pv. tomato (strain ATCC BAA-871 / DC3000), this protein is Probable chorismate pyruvate-lyase.